A 510-amino-acid polypeptide reads, in one-letter code: Probable cytosol aminopeptidase (510 aa).

Lys-282 and Asp-287 together coordinate Mn(2+). Residue Lys-294 is part of the active site. 3 residues coordinate Mn(2+): Asp-305, Asp-364, and Glu-366. Residue Arg-368 is part of the active site.

This sequence belongs to the peptidase M17 family. It depends on Mn(2+) as a cofactor.

The protein localises to the cytoplasm. It catalyses the reaction Release of an N-terminal amino acid, Xaa-|-Yaa-, in which Xaa is preferably Leu, but may be other amino acids including Pro although not Arg or Lys, and Yaa may be Pro. Amino acid amides and methyl esters are also readily hydrolyzed, but rates on arylamides are exceedingly low.. The enzyme catalyses Release of an N-terminal amino acid, preferentially leucine, but not glutamic or aspartic acids.. Its function is as follows. Presumably involved in the processing and regular turnover of intracellular proteins. Catalyzes the removal of unsubstituted N-terminal amino acids from various peptides. This chain is Probable cytosol aminopeptidase, found in Cupriavidus metallidurans (strain ATCC 43123 / DSM 2839 / NBRC 102507 / CH34) (Ralstonia metallidurans).